The primary structure comprises 1837 residues: Zinc finger SWIM domain-containing protein 8 (1837 aa).

Residues serine 36, serine 48, and serine 53 each carry the phosphoserine modification. A disordered region spans residues 45–65 (RKQSAGPNSPTGGGGGGGSGG). Residues 55 to 65 (TGGGGGGGSGG) are compositionally biased toward gly residues. Residues 172 to 208 (YNVAVMFDRCRVTSCSCTCGAGAKWCTHVVALCLFRI) form an SWIM-type zinc finger. Serine 437 is subject to Phosphoserine. Disordered stretches follow at residues 514-727 (SRPG…EEDD), 803-823 (NPPD…KVST), and 1016-1232 (SQTH…VPNQ). Basic and acidic residues-rich tracts occupy residues 523–532 (GLEESRDRPR) and 566–575 (LSAEGGDKAL). Serine 567 carries the post-translational modification Phosphoserine. Over residues 579 to 602 (GPGGGKAKALGGAGSGSKGSAGGG) the composition is skewed to gly residues. The span at 1019–1040 (HKPQTLSSFYSSSRPTTASQRS) shows a compositional bias: polar residues. Positions 1119-1130 (SRGGYNGRGWGS) are enriched in gly residues. Threonine 1139 is modified (phosphothreonine). Residues 1144–1159 (IDSSAPETTSDSSPTL) are compositionally biased toward polar residues. Phosphoserine occurs at positions 1153, 1156, and 1160. Positions 1174 to 1209 (GRGQDSDSISSSSSDSLGSSSSSGSRRASASGGARA) are enriched in low complexity. Residues 1210–1226 (KTVEVGRYKGRRPESHA) show a composition bias toward basic and acidic residues. The residue at position 1267 (serine 1267) is a Phosphoserine. Disordered regions lie at residues 1442 to 1464 (SASG…GGPG) and 1635 to 1656 (QPSP…SQPV). The segment covering 1447–1464 (RAGGEAGRGMPEGRGGPG) has biased composition (gly residues). At serine 1836 the chain carries Phosphoserine.

Belongs to the ZSWIM8 family. Component of the SCF-like E3 ubiquitin-protein ligase complex which contains CUL3, RBX1, ELOB, ELOC and ZSWIM8. In terms of assembly, (Microbial infection) Interacts with Zika virus protein NS5; this interaction allows STAT2 binding and subsequent proteasomal degradation.

Its subcellular location is the cytoplasm. The protein localises to the cytosol. The protein operates within protein modification; protein ubiquitination. In terms of biological role, substrate recognition component of a SCF-like E3 ubiquitin-protein ligase complex that promotes target-directed microRNA degradation (TDMD), a process that mediates degradation of microRNAs (miRNAs). The SCF-like E3 ubiquitin-protein ligase complex acts by catalyzing ubiquitination and subsequent degradation of AGO proteins (AGO1, AGO2, AGO3 and/or AGO4), thereby exposing miRNAs for degradation. Specifically recognizes and binds AGO proteins when they are engaged with a TDMD target. May also act as a regulator of axon guidance: specifically recognizes misfolded ROBO3 and promotes its ubiquitination and subsequent degradation. Plays an essential role for proper embryonic development of heart and lung. Controls protein quality of DAB1, a key signal molecule for brain development, thus protecting its signaling strength. Mechanistically, recognizes intrinsically disordered regions of DAB1 and eliminates misfolded DAB1 that cannot be properly phosphorylated. Its function is as follows. (Microbial infection) Participates in Zika virus inhibition of IFN signaling by acting as a scaffold protein to connect ZSWIM8/CUL3 ligase complex and STAT2, leading to STAT2 degradation. This is Zinc finger SWIM domain-containing protein 8 from Homo sapiens (Human).